Reading from the N-terminus, the 1006-residue chain is E3 ubiquitin-protein ligase MIB1 (1006 aa).

The 69-residue stretch at 6–74 (NNRVMVEGVG…AYDLRILDSA (69 aa)) folds into the MIB/HERC2 1 domain. The ZZ-type zinc-finger motif lies at 80 to 132 (HDGTMCDTCRQQPIIGIRWKCAECTNYDLCTVCYHGDKHHLRHRFYRITTPGS). Positions 85, 88, 100, 103, 109, 112, 118, and 122 each coordinate Zn(2+). Positions 143–221 (SKKITARGIF…MSDLKCVQDA (79 aa)) constitute an MIB/HERC2 2 domain. Phosphoserine is present on S408. ANK repeat units follow at residues 430 to 460 (DLNEELVKAAANGDVAKVEDLLKRPDVDVNG), 463 to 492 (AGHTAMQAASQNGHVDILKLLLKQNVDVEA), 496 to 525 (DGDRAVHHAAFGDEGAVIEVLHRGSADLNA), 529 to 558 (RRQTPLHIAVNKGHLQVVKTLLDFGCHPSL), 562 to 591 (EGDTPLHDAISKKRDDILAVLLEAGADVTI), 595 to 627 (NGFNALHHAALRGNPSAMRVLLSKLPRPWIVDE), 631 to 661 (DGYTALHLAALNNHVEVAELLVHQGNANLDI), 665 to 694 (NQQTALHLAVERQHTQIVRLLVRAGAKLDI), and 698 to 729 (DGDTPLHEALRHHTLSQLRQLQDMQDVGKVDA). RING-type zinc fingers lie at residues 819-854 (CMVCSDMKRDTLFGPCGHIATCSLCSPRVKKCLICK) and 866-901 (CVVCSDKKAAVLFQPCGHMCACENCANLMKKCVQCR). A coiled-coil region spans residues 935–962 (QKDKDNTNVNADVQKLQQQLQDIKEQTM). Residues 963 to 996 (CPVCLDRLKNMIFLCGHGTCQLCGDRMSECPICR) form an RING-type 3 zinc finger.

As to quaternary structure, interacts with CEP131 and PCM1. Post-translationally, ubiquitinated; possibly via autoubiquitination. Ubiquitinated; this modification is inhibited in response to cellular stress, such as ultraviolet light (UV) radiation or heat shock. In terms of tissue distribution, widely expressed at low level. Expressed at higher level in spinal cord, ovary, whole brain, and all specific brain regions examined.

It localises to the cytoplasm. Its subcellular location is the cytoskeleton. The protein localises to the microtubule organizing center. It is found in the centrosome. The protein resides in the centriolar satellite. It localises to the cell membrane. It carries out the reaction S-ubiquitinyl-[E2 ubiquitin-conjugating enzyme]-L-cysteine + [acceptor protein]-L-lysine = [E2 ubiquitin-conjugating enzyme]-L-cysteine + N(6)-ubiquitinyl-[acceptor protein]-L-lysine.. The protein operates within protein modification; protein ubiquitination. Functionally, E3 ubiquitin-protein ligase that mediates ubiquitination of Delta receptors, which act as ligands of Notch proteins. Positively regulates the Delta-mediated Notch signaling by ubiquitinating the intracellular domain of Delta, leading to endocytosis of Delta receptors. Probably mediates ubiquitination and subsequent proteasomal degradation of DAPK1, thereby antagonizing anti-apoptotic effects of DAPK1 to promote TNF-induced apoptosis. Involved in ubiquitination of centriolar satellite CEP131, CEP290 and PCM1 proteins and hence inhibits primary cilium formation in proliferating cells. Mediates 'Lys-63'-linked polyubiquitination of TBK1, which probably participates in kinase activation. (Microbial infection) During adenovirus infection, mediates ubiquitination of Core-capsid bridging protein. This allows viral genome delivery into nucleus for infection. This chain is E3 ubiquitin-protein ligase MIB1 (MIB1), found in Homo sapiens (Human).